We begin with the raw amino-acid sequence, 198 residues long: Pyridoxal 5'-phosphate synthase subunit PdxT (198 aa).

49 to 51 is a binding site for L-glutamine; that stretch reads GES. The Nucleophile role is filled by Cys81. Residues Arg113 and 141–142 contribute to the L-glutamine site; that span reads IR. Catalysis depends on charge relay system residues His177 and Glu179.

This sequence belongs to the glutaminase PdxT/SNO family. In the presence of PdxS, forms a dodecamer of heterodimers. Only shows activity in the heterodimer.

The enzyme catalyses aldehydo-D-ribose 5-phosphate + D-glyceraldehyde 3-phosphate + L-glutamine = pyridoxal 5'-phosphate + L-glutamate + phosphate + 3 H2O + H(+). It carries out the reaction L-glutamine + H2O = L-glutamate + NH4(+). The protein operates within cofactor biosynthesis; pyridoxal 5'-phosphate biosynthesis. Functionally, catalyzes the hydrolysis of glutamine to glutamate and ammonia as part of the biosynthesis of pyridoxal 5'-phosphate. The resulting ammonia molecule is channeled to the active site of PdxS. This is Pyridoxal 5'-phosphate synthase subunit PdxT from Mycobacterium tuberculosis (strain ATCC 25177 / H37Ra).